A 296-amino-acid chain; its full sequence is GTPase Era (296 aa).

Residues 7–174 (RTGFVAIVGR…LEEIAQRLPE (168 aa)) form the Era-type G domain. The interval 15–22 (GRPNVGKS) is G1. 15–22 (GRPNVGKS) contacts GTP. Residues 41 to 45 (QTTRH) are G2. Positions 62–65 (DTPG) are G3. GTP is bound by residues 62 to 66 (DTPGF) and 123 to 126 (SKID). The interval 123–126 (SKID) is G4. The G5 stretch occupies residues 153 to 155 (VSA). The 85-residue stretch at 197 to 281 (VREKIFRLVG…HLEVYIKVRK (85 aa)) folds into the KH type-2 domain.

It belongs to the TRAFAC class TrmE-Era-EngA-EngB-Septin-like GTPase superfamily. Era GTPase family. As to quaternary structure, monomer.

It is found in the cytoplasm. The protein localises to the cell inner membrane. Its function is as follows. An essential GTPase that binds both GDP and GTP, with rapid nucleotide exchange. Plays a role in 16S rRNA processing and 30S ribosomal subunit biogenesis and possibly also in cell cycle regulation and energy metabolism. The polypeptide is GTPase Era (Bordetella avium (strain 197N)).